A 210-amino-acid chain; its full sequence is Na(+)-translocating NADH-quinone reductase subunit D (210 aa).

6 consecutive transmembrane segments (helical) span residues 14-34 (PIVN…ALAV), 42-62 (LVMA…ISMI), 72-92 (IIVQ…LLQA), 103-123 (VFVG…AYAM), 131-151 (FMDG…VGFV), and 178-198 (NGLL…IWII).

Belongs to the NqrDE/RnfAE family. In terms of assembly, composed of six subunits; NqrA, NqrB, NqrC, NqrD, NqrE and NqrF.

It localises to the cell inner membrane. It carries out the reaction a ubiquinone + n Na(+)(in) + NADH + H(+) = a ubiquinol + n Na(+)(out) + NAD(+). Functionally, NQR complex catalyzes the reduction of ubiquinone-1 to ubiquinol by two successive reactions, coupled with the transport of Na(+) ions from the cytoplasm to the periplasm. NqrA to NqrE are probably involved in the second step, the conversion of ubisemiquinone to ubiquinol. In Shewanella sp. (strain ANA-3), this protein is Na(+)-translocating NADH-quinone reductase subunit D.